Consider the following 308-residue polypeptide: Porphobilinogen deaminase (308 aa).

The residue at position 241 (Cys-241) is an S-(dipyrrolylmethanemethyl)cysteine.

The protein belongs to the HMBS family. In terms of assembly, monomer. Requires dipyrromethane as cofactor.

It catalyses the reaction 4 porphobilinogen + H2O = hydroxymethylbilane + 4 NH4(+). It functions in the pathway porphyrin-containing compound metabolism; protoporphyrin-IX biosynthesis; coproporphyrinogen-III from 5-aminolevulinate: step 2/4. Tetrapolymerization of the monopyrrole PBG into the hydroxymethylbilane pre-uroporphyrinogen in several discrete steps. The chain is Porphobilinogen deaminase from Staphylococcus aureus (strain Newman).